The following is a 294-amino-acid chain: Xyloglucan endotransglucosylase protein 34 (294 aa).

The N-terminal stretch at 1–22 is a signal peptide; the sequence is MAAAYPWTLFLGMLVMVSGTMG. A GH16 domain is found at 23-221; the sequence is AALRKPVDVA…WSKAPFIASY (199 aa). Glu-107 serves as the catalytic Nucleophile. Glu-111 acts as the Proton donor in catalysis. Position 111 (Glu-111) interacts with xyloglucan. A glycan (N-linked (GlcNAc...) asparagine) is linked at Asn-115. Residues 124-126, 134-136, 200-201, and Gly-205 each bind xyloglucan; these read QTN, DRE, and DW. Disulfide bonds link Cys-229–Cys-238 and Cys-275–Cys-288. Position 280 (Arg-280) interacts with xyloglucan.

This sequence belongs to the glycosyl hydrolase 16 family. XTH group 1 subfamily. Post-translationally, contains at least one intrachain disulfide bond essential for its enzymatic activity. In terms of processing, N-glycosylated. Contains N-acetylglucosamine and mannose. Glycosylation is not essential for its catalytic activity. As to expression, expressed in mature gelatinous (G) cell wall layer of the tension wood fibers. Highly expressed in the outer zone of the G layer close to the secondary S2 layer. Not expressed in the mature walls of the ray cells or vessel elements (at protein level). Highest expression in both the phloem/cambium and differentiating xylem of the mature stem containing primarily secondary cell wall forming cells, in root tips and young roots. Expressed at low levels in apical bud.

The protein localises to the secreted. Its subcellular location is the cell wall. The protein resides in the extracellular space. It localises to the apoplast. It is found in the cytoplasm. It catalyses the reaction breaks a beta-(1-&gt;4) bond in the backbone of a xyloglucan and transfers the xyloglucanyl segment on to O-4 of the non-reducing terminal glucose residue of an acceptor, which can be a xyloglucan or an oligosaccharide of xyloglucan.. In terms of biological role, catalyzes xyloglucan endotransglycosylation (XET). Cleaves and religates xyloglucan polymers. Does not catalyze xyloglucan endohydrolysis (XEH). Involved in early phases of secondary (S) cell wall formation in fibers of the xylem and phloem vascular tissues of wood stems. May play a role in restructuring primary cell walls, possibly creating and reinforcing the connections between the primary and S cell wall layers. Functions in the gelatinous (G) layers of the tension wood fibers that are involved in bending of the wood stems. May play a role in G fiber shrinking by repairing broken xyloglucan cross-links between G and S2 cell wall layers via its XET activity to maintain connections between the layers. The protein is Xyloglucan endotransglucosylase protein 34 of Populus tremula x Populus tremuloides (Hybrid aspen).